Reading from the N-terminus, the 244-residue chain is 1-(5-phosphoribosyl)-5-[(5-phosphoribosylamino)methylideneamino] imidazole-4-carboxamide isomerase (244 aa).

Asp8 serves as the catalytic Proton acceptor. Asp130 functions as the Proton donor in the catalytic mechanism.

Belongs to the HisA/HisF family.

Its subcellular location is the cytoplasm. It catalyses the reaction 1-(5-phospho-beta-D-ribosyl)-5-[(5-phospho-beta-D-ribosylamino)methylideneamino]imidazole-4-carboxamide = 5-[(5-phospho-1-deoxy-D-ribulos-1-ylimino)methylamino]-1-(5-phospho-beta-D-ribosyl)imidazole-4-carboxamide. Its pathway is amino-acid biosynthesis; L-histidine biosynthesis; L-histidine from 5-phospho-alpha-D-ribose 1-diphosphate: step 4/9. In Hahella chejuensis (strain KCTC 2396), this protein is 1-(5-phosphoribosyl)-5-[(5-phosphoribosylamino)methylideneamino] imidazole-4-carboxamide isomerase.